The sequence spans 203 residues: Holliday junction branch migration complex subunit RuvA (203 aa).

The interval 1–63 is domain I; sequence MIGKLSGKID…EEHIHLYGFL (63 aa). Positions 64-142 are domain II; that stretch reads TIEEKNFFNL…KISTGAAIIN (79 aa). The segment at 143 to 149 is flexible linker; the sequence is DSLNIKN. The tract at residues 150–203 is domain III; that stretch reads ITSVASNEVIKALVNLGFSRFEAQNSVQGIVIQNPEISIDELIKTALKNRNAGL.

It belongs to the RuvA family. In terms of assembly, homotetramer. Forms an RuvA(8)-RuvB(12)-Holliday junction (HJ) complex. HJ DNA is sandwiched between 2 RuvA tetramers; dsDNA enters through RuvA and exits via RuvB. An RuvB hexamer assembles on each DNA strand where it exits the tetramer. Each RuvB hexamer is contacted by two RuvA subunits (via domain III) on 2 adjacent RuvB subunits; this complex drives branch migration. In the full resolvosome a probable DNA-RuvA(4)-RuvB(12)-RuvC(2) complex forms which resolves the HJ.

It is found in the cytoplasm. In terms of biological role, the RuvA-RuvB-RuvC complex processes Holliday junction (HJ) DNA during genetic recombination and DNA repair, while the RuvA-RuvB complex plays an important role in the rescue of blocked DNA replication forks via replication fork reversal (RFR). RuvA specifically binds to HJ cruciform DNA, conferring on it an open structure. The RuvB hexamer acts as an ATP-dependent pump, pulling dsDNA into and through the RuvAB complex. HJ branch migration allows RuvC to scan DNA until it finds its consensus sequence, where it cleaves and resolves the cruciform DNA. The chain is Holliday junction branch migration complex subunit RuvA from Rickettsia akari (strain Hartford).